A 269-amino-acid polypeptide reads, in one-letter code: Aquaporin-1 (269 aa).

The Cytoplasmic portion of the chain corresponds to 1 to 11 (MASEIKKKLFW). The helical transmembrane segment at 12–29 (RAVVAEFLAMTLFVFISI) threads the bilayer. The Extracellular segment spans residues 30–46 (GSALGFNYPLERNQTLV). Asn42 carries an N-linked (GlcNAc...) asparagine glycan. Residues 47–65 (QDNVKVSLAFGLSIATLAQ) form a helical membrane-spanning segment. Topologically, residues 66 to 68 (SVG) are cytoplasmic. An intramembrane segment occupies 69 to 82 (HISGAHLNPAVTLG). An NPA 1 motif is present at residues 76–78 (NPA). Topologically, residues 83 to 90 (LLLSCQIS) are cytoplasmic. The helical transmembrane segment at 91–109 (ILRAVMYIIAQCVGAIVAS) threads the bilayer. Topologically, residues 110-133 (AILSGITSSLLENSLGRNDLARGV) are extracellular. A helical membrane pass occupies residues 134–153 (NSGQGLGIEIIGTLQLVLCV). Residues 154–163 (LATTDRRRRD) are Cytoplasmic-facing. Residues 164–181 (LGGSAPLAIGLSVALGHL) traverse the membrane as a helical segment. The Extracellular segment spans residues 182-186 (LAIDY). The stretch at 187–199 (TGCGINPARSFGS) is an intramembrane region. The NPA 2 signature appears at 192–194 (NPA). Topologically, residues 200–206 (AVLTRNF) are extracellular. A glycan (N-linked (GlcNAc...) asparagine) is linked at Asn205. The chain crosses the membrane as a helical span at residues 207-224 (SNHWIFWVGPFIGSALAV). The Cytoplasmic portion of the chain corresponds to 225 to 269 (LIYDFILAPRSSDFTDRMKVWTSGQVEEYDLDADDINSRVEMKPK). Residue Ser247 is modified to Phosphoserine. Tyr253 carries the post-translational modification Phosphotyrosine. Phosphoserine is present on Ser262.

This sequence belongs to the MIP/aquaporin (TC 1.A.8) family. As to quaternary structure, homotetramer; each monomer provides an independent water pore. Component of the ankyrin-1 complex in the erythrocyte, composed of ANK1, RHCE, RHAG, SLC4A1, EPB42, GYPA, GYPB and AQP1. Interacts with EPHB2; involved in endolymph production in the inner ear. Identified in a complex with STOM. Interacts (via the N-terminal) with ANK1 (via ANK 1-5 repeats). Interacts (via the C-terminal) with EPB42. As to expression, erythrocytes and renal tubules.

The protein localises to the cell membrane. The enzyme catalyses H2O(in) = H2O(out). It catalyses the reaction nitric oxide(out) = nitric oxide(in). The catalysed reaction is CO2(out) = CO2(in). It carries out the reaction glycerol(in) = glycerol(out). The enzyme catalyses H2O2(out) = H2O2(in). It catalyses the reaction K(+)(in) = K(+)(out). The catalysed reaction is Na(+)(in) = Na(+)(out). Forms a water channel that facilitates the transport of water across cell membranes, playing a crucial role in water homeostasis in various tissues. Could also be permeable to small solutes including hydrogen peroxide, glycerol and gases such as amonnia (NH3), nitric oxide (NO) and carbon dioxide (CO2). Recruited to the ankyrin-1 complex, a multiprotein complex of the erythrocyte membrane, it could be part of a CO2 metabolon, linking facilitated diffusion of CO2 across the membrane, anion exchange of Cl(-)/HCO3(-) and interconversion of dissolved CO2 and carbonic acid in the cytosol. In vitro, it shows non-selective gated cation channel activity and may be permeable to cations like K(+) and Na(+) in vivo. The protein is Aquaporin-1 of Rattus norvegicus (Rat).